The primary structure comprises 619 residues: MPKLRSATSTEGRNMAGARALWRATGVKDNDFGKPIIAIANSFTQFVPGHVHLKDMGSLVAGAIEEAGGIAKEFNTIAVDDGIAMGHGGMLYSLPSRELIADSVEYMVNAHCADALVCISNCDKITPGMLMAALRLNIPVVFVSGGPMEAGKTKLSDKLIKLDLVDAMVAAADSSVSDEDSAKIERSACPTCGSCSGMFTANSMNCLTEALGLSLPGNGSMLATHADRRELFLEAGRRVMALTKRYYEKDDASALPRNIASFKAFENAMALDIAMGGSSNTVLHLLAAAQEADVAFTMDDIDRMSRQVPHLCKVAPSTAKYHMEDVHRAGGVMGILGELDRAGLLHTDVPHVAADAGGNLKSVLAKYDVMQTQDDNVKQFFMAGPAGIPTTKAFSQDCRWPSLDDDRREGCIRSREFAFSQEGGLAVLSGNLADNGCIVKTAGVDESNLTFTGSARVYESQDDAVAGILGGEVVAGDVVVIRYEGPKGGPGMQEMLYPTSYLKSRGLGKACALITDGRFSGGTSGLSIGHVSPEAAAGGTIALIENGDRIEIDIPKRSIKLAVSDAELAARRETMLARGPMAWKPLSRQRYVSMALKAYAMLATSADKGAVRDRSKLED.

Asp-81 is a binding site for Mg(2+). Residue Cys-122 participates in [2Fe-2S] cluster binding. The Mg(2+) site is built by Asp-123 and Lys-124. Lys-124 carries the N6-carboxylysine modification. Cys-195 provides a ligand contact to [2Fe-2S] cluster. Residue Glu-494 coordinates Mg(2+). The Proton acceptor role is filled by Ser-520.

The protein belongs to the IlvD/Edd family. Homodimer. It depends on [2Fe-2S] cluster as a cofactor. The cofactor is Mg(2+).

The enzyme catalyses (2R)-2,3-dihydroxy-3-methylbutanoate = 3-methyl-2-oxobutanoate + H2O. It catalyses the reaction (2R,3R)-2,3-dihydroxy-3-methylpentanoate = (S)-3-methyl-2-oxopentanoate + H2O. It functions in the pathway amino-acid biosynthesis; L-isoleucine biosynthesis; L-isoleucine from 2-oxobutanoate: step 3/4. It participates in amino-acid biosynthesis; L-valine biosynthesis; L-valine from pyruvate: step 3/4. Its function is as follows. Functions in the biosynthesis of branched-chain amino acids. Catalyzes the dehydration of (2R,3R)-2,3-dihydroxy-3-methylpentanoate (2,3-dihydroxy-3-methylvalerate) into 2-oxo-3-methylpentanoate (2-oxo-3-methylvalerate) and of (2R)-2,3-dihydroxy-3-methylbutanoate (2,3-dihydroxyisovalerate) into 2-oxo-3-methylbutanoate (2-oxoisovalerate), the penultimate precursor to L-isoleucine and L-valine, respectively. The polypeptide is Dihydroxy-acid dehydratase (Shewanella sp. (strain MR-4)).